Here is a 290-residue protein sequence, read N- to C-terminus: uncharacterized protein (290 aa).

Disordered stretches follow at residues 1-98 and 209-236; these read MLGQ…SRRV and LSGQRGAGPGNSAYTPRRSQGGPRAATT. Residues 63-76 are compositionally biased toward basic and acidic residues; that stretch reads KPDRVRPGQRDRIG. A compositionally biased stretch (low complexity) spans 87–97; it reads AGQARAASSRR. A helical membrane pass occupies residues 261 to 281; it reads CILTALLAVSFHSIGVVIMTS.

The protein resides in the membrane. This is an uncharacterized protein from Homo sapiens (Human).